Here is a 273-residue protein sequence, read N- to C-terminus: 4-hydroxy-tetrahydrodipicolinate reductase (273 aa).

NAD(+) contacts are provided by residues 12-17 (GAGGRM) and Glu38. Residue Arg39 participates in NADP(+) binding. NAD(+)-binding positions include 102 to 104 (GTT) and 126 to 129 (AANF). His159 serves as the catalytic Proton donor/acceptor. (S)-2,3,4,5-tetrahydrodipicolinate is bound at residue His160. Lys163 acts as the Proton donor in catalysis. 169–170 (GT) is a (S)-2,3,4,5-tetrahydrodipicolinate binding site.

It belongs to the DapB family. In terms of assembly, homotetramer.

It localises to the cytoplasm. The enzyme catalyses (S)-2,3,4,5-tetrahydrodipicolinate + NAD(+) + H2O = (2S,4S)-4-hydroxy-2,3,4,5-tetrahydrodipicolinate + NADH + H(+). It catalyses the reaction (S)-2,3,4,5-tetrahydrodipicolinate + NADP(+) + H2O = (2S,4S)-4-hydroxy-2,3,4,5-tetrahydrodipicolinate + NADPH + H(+). The protein operates within amino-acid biosynthesis; L-lysine biosynthesis via DAP pathway; (S)-tetrahydrodipicolinate from L-aspartate: step 4/4. Functionally, catalyzes the conversion of 4-hydroxy-tetrahydrodipicolinate (HTPA) to tetrahydrodipicolinate. The sequence is that of 4-hydroxy-tetrahydrodipicolinate reductase from Yersinia pseudotuberculosis serotype O:1b (strain IP 31758).